The following is a 465-amino-acid chain: Asparagine--tRNA ligase (465 aa).

It belongs to the class-II aminoacyl-tRNA synthetase family. As to quaternary structure, homodimer.

It localises to the cytoplasm. It carries out the reaction tRNA(Asn) + L-asparagine + ATP = L-asparaginyl-tRNA(Asn) + AMP + diphosphate + H(+). This is Asparagine--tRNA ligase from Clostridium perfringens (strain ATCC 13124 / DSM 756 / JCM 1290 / NCIMB 6125 / NCTC 8237 / Type A).